A 639-amino-acid chain; its full sequence is Bone morphogenetic protein 1 homolog (639 aa).

Positions 1 to 23 (MDLLYYMTVSLLGFILSLTTFIG) are cleaved as a signal peptide. The propeptide occupies 24 to 109 (ETTRALSDDV…RAVTARPERR (86 aa)). Positions 100-305 (RAVTARPERR…IQANLLYKCP (206 aa)) constitute a Peptidase M12A domain. 2 N-linked (GlcNAc...) asparagine glycosylation sites follow: asparagine 122 and asparagine 140. Disulfide bonds link cysteine 143–cysteine 304, cysteine 167–cysteine 189, cysteine 169–cysteine 170, cysteine 307–cysteine 333, cysteine 360–cysteine 382, and cysteine 420–cysteine 446. Histidine 197 is a binding site for Zn(2+). Glutamate 198 is a catalytic residue. Histidine 201 and histidine 207 together coordinate Zn(2+). CUB domains follow at residues 307 to 419 (CGRT…YEAI) and 420 to 531 (CGGH…DFFK). Asparagine 317 carries an N-linked (GlcNAc...) asparagine glycan. Asparagine 455 is a glycosylation site (N-linked (GlcNAc...) asparagine). Disulfide bonds link cysteine 473–cysteine 495, cysteine 536–cysteine 548, cysteine 544–cysteine 557, and cysteine 559–cysteine 572. Residues 532-573 (EKDECAQPDQGGCMDVCVNTIGSYRCDCRPGYELSSDGRRCE) enclose the EGF-like; calcium-binding domain.

Zn(2+) serves as cofactor. Ectodermal and primary mesenchyme cells in hatched blastula.

The sequence is that of Bone morphogenetic protein 1 homolog from Strongylocentrotus purpuratus (Purple sea urchin).